A 160-amino-acid chain; its full sequence is Deoxyuridine 5'-triphosphate nucleotidohydrolase (160 aa).

Substrate-binding positions include 79 to 81 (RSG), Asn92, 96 to 98 (TVD), and Lys106.

Belongs to the dUTPase family. Requires Mg(2+) as cofactor.

It carries out the reaction dUTP + H2O = dUMP + diphosphate + H(+). The protein operates within pyrimidine metabolism; dUMP biosynthesis; dUMP from dCTP (dUTP route): step 2/2. In terms of biological role, this enzyme is involved in nucleotide metabolism: it produces dUMP, the immediate precursor of thymidine nucleotides and it decreases the intracellular concentration of dUTP so that uracil cannot be incorporated into DNA. The sequence is that of Deoxyuridine 5'-triphosphate nucleotidohydrolase from Rhizobium meliloti (strain 1021) (Ensifer meliloti).